The primary structure comprises 392 residues: MEARVCVLFGAAALLRLLLLCVGVYQDQTLKLKYTDVDYHVFTDAARFITQGESPYRRSTFRYTPLLALLLVPNVYLSLLFGKLLFGFCDLLSGLLMFRLLVLRGASHGSACVSCGLWLLNPLPMAVSTRGNAESVLAVLVLSTLLCLQLRKHTTAALLFGLSVHMKIYPVTYALPIALALTAAPARGRGVLLRFFSPALLRFAAVSAAVFLSLGLIFYCRYGWEFLQEAYLYHLTRRDLRHNFSPFFYLQYVCAERCWSSGLLPLLLLPQLLLLLLASAAFSSDLPFCCFLHTAVFVSFNRVCTSQYFLWYLCLLPVVLPRLRLRLGRGLLLLLLWLLLQGLWLAPAYLLEFQGWNSFSWIWAASLLFLLTNTFILAQIIQHYRPHDRKAD.

Residues 1-4 lie on the Cytoplasmic side of the membrane; the sequence is MEAR. The chain crosses the membrane as a helical span at residues 5-25; sequence VCVLFGAAALLRLLLLCVGVY. Over 26-65 the chain is Lumenal; that stretch reads QDQTLKLKYTDVDYHVFTDAARFITQGESPYRRSTFRYTP. Residues 66–86 traverse the membrane as a helical segment; that stretch reads LLALLLVPNVYLSLLFGKLLF. Residues 87 to 125 lie on the Cytoplasmic side of the membrane; sequence GFCDLLSGLLMFRLLVLRGASHGSACVSCGLWLLNPLPM. Residues 126-148 form a helical membrane-spanning segment; it reads AVSTRGNAESVLAVLVLSTLLCL. Residues 149–156 lie on the Lumenal side of the membrane; it reads QLRKHTTA. The helical transmembrane segment at 157–177 threads the bilayer; that stretch reads ALLFGLSVHMKIYPVTYALPI. Residues 178-198 are Cytoplasmic-facing; that stretch reads ALALTAAPARGRGVLLRFFSP. The chain crosses the membrane as a helical span at residues 199–219; that stretch reads ALLRFAAVSAAVFLSLGLIFY. Topologically, residues 220–261 are lumenal; sequence CRYGWEFLQEAYLYHLTRRDLRHNFSPFFYLQYVCAERCWSS. A helical membrane pass occupies residues 262–282; sequence GLLPLLLLPQLLLLLLASAAF. The Cytoplasmic portion of the chain corresponds to 283–302; that stretch reads SSDLPFCCFLHTAVFVSFNR. The chain crosses the membrane as a helical span at residues 303–323; it reads VCTSQYFLWYLCLLPVVLPRL. Topologically, residues 324–330 are lumenal; sequence RLRLGRG. A helical membrane pass occupies residues 331 to 351; sequence LLLLLLWLLLQGLWLAPAYLL. At 352 to 360 the chain is on the cytoplasmic side; that stretch reads EFQGWNSFS. Residues 361 to 381 traverse the membrane as a helical segment; the sequence is WIWAASLLFLLTNTFILAQII. Topologically, residues 382–392 are lumenal; that stretch reads QHYRPHDRKAD.

This sequence belongs to the PIGM family. In terms of assembly, part of the glycosylphosphatidylinositol-mannosyltransferase I complex that is composed of PIGM and PIGX.

It is found in the endoplasmic reticulum membrane. It participates in glycolipid biosynthesis; glycosylphosphatidylinositol-anchor biosynthesis. Its function is as follows. Catalytic subunit of the glycosylphosphatidylinositol-mannosyltransferase I complex which catalyzes the transfer of the first mannose, via an alpha-1,4 bond from a dolichol-phosphate-mannose (Dol-P-Man) to the glucosaminyl acyl phosphatidylinositol (GlcN-(acyl)PI) intermediate to generate alpha-D-Man-(1-&gt;4)-alpha-D-GlcN-(1-&gt;6)-(1-radyl,2-acyl-sn-glycero-3-phospho)-2-acyl-inositol and participates in the sixth step of the glycosylphosphatidylinositol-anchor biosynthesis. The chain is GPI alpha-1,4-mannosyltransferase I, catalytic subunit from Danio rerio (Zebrafish).